Consider the following 157-residue polypeptide: SsrA-binding protein (157 aa).

Positions 134-157 (HDKRESEKKRDWGREKGRLLRARG) are disordered. Over residues 135-151 (DKRESEKKRDWGREKGR) the composition is skewed to basic and acidic residues.

The protein belongs to the SmpB family.

Its subcellular location is the cytoplasm. In terms of biological role, required for rescue of stalled ribosomes mediated by trans-translation. Binds to transfer-messenger RNA (tmRNA), required for stable association of tmRNA with ribosomes. tmRNA and SmpB together mimic tRNA shape, replacing the anticodon stem-loop with SmpB. tmRNA is encoded by the ssrA gene; the 2 termini fold to resemble tRNA(Ala) and it encodes a 'tag peptide', a short internal open reading frame. During trans-translation Ala-aminoacylated tmRNA acts like a tRNA, entering the A-site of stalled ribosomes, displacing the stalled mRNA. The ribosome then switches to translate the ORF on the tmRNA; the nascent peptide is terminated with the 'tag peptide' encoded by the tmRNA and targeted for degradation. The ribosome is freed to recommence translation, which seems to be the essential function of trans-translation. In Nitrobacter hamburgensis (strain DSM 10229 / NCIMB 13809 / X14), this protein is SsrA-binding protein.